The chain runs to 194 residues: Adenylate kinase isoenzyme 1 (194 aa).

Ala-2 is modified (N-acetylalanine). 18 to 23 contacts ATP; sequence GSGKGT. Residues 38–67 form an NMP region; the sequence is SSGDLLRAEVASGSERGKQLQAIMQKGELV. AMP-binding positions include Ser-39, Arg-44, 65-67, 94-97, and Gln-101; these read ELV and GYPR. An LID region spans residues 131 to 141; it reads KRGQTSGRSDD. Position 132 (Arg-132) interacts with ATP. Residues Arg-138 and Arg-149 each coordinate AMP. Residue Leu-177 participates in ATP binding.

Belongs to the adenylate kinase family. AK1 subfamily. Monomer. Requires Mg(2+) as cofactor.

Its subcellular location is the cytoplasm. The enzyme catalyses a ribonucleoside 5'-phosphate + ATP = a ribonucleoside 5'-diphosphate + ADP. The catalysed reaction is AMP + ATP = 2 ADP. It catalyses the reaction dAMP + ATP = dADP + ADP. It carries out the reaction dATP + AMP = dADP + ADP. The enzyme catalyses dAMP + dATP = 2 dADP. The catalysed reaction is a 2'-deoxyribonucleoside 5'-diphosphate + ATP = a 2'-deoxyribonucleoside 5'-triphosphate + ADP. It catalyses the reaction a ribonucleoside 5'-diphosphate + ATP = a ribonucleoside 5'-triphosphate + ADP. It carries out the reaction CDP + GTP = CTP + GDP. The enzyme catalyses GDP + ATP = GTP + ADP. The catalysed reaction is UDP + ATP = UTP + ADP. It catalyses the reaction GTP + UDP = UTP + GDP. It carries out the reaction dTDP + GTP = dTTP + GDP. The enzyme catalyses dCDP + GTP = dCTP + GDP. The catalysed reaction is dGDP + ATP = dGTP + ADP. It catalyses the reaction dADP + GTP = dATP + GDP. It carries out the reaction thiamine diphosphate + ADP = thiamine triphosphate + AMP. Its function is as follows. Catalyzes the reversible transfer of the terminal phosphate group between ATP and AMP. Also displays broad nucleoside diphosphate kinase activity. Plays an important role in cellular energy homeostasis and in adenine nucleotide metabolism. Also catalyzes at a very low rate the synthesis of thiamine triphosphate (ThTP) from thiamine diphosphate (ThDP) and ADP. In Cyprinus carpio (Common carp), this protein is Adenylate kinase isoenzyme 1 (ak1).